Consider the following 316-residue polypeptide: Transaldolase (316 aa).

The active-site Schiff-base intermediate with substrate is lysine 132.

It belongs to the transaldolase family. Type 1 subfamily. In terms of assembly, homodimer.

The protein localises to the cytoplasm. The catalysed reaction is D-sedoheptulose 7-phosphate + D-glyceraldehyde 3-phosphate = D-erythrose 4-phosphate + beta-D-fructose 6-phosphate. Its pathway is carbohydrate degradation; pentose phosphate pathway; D-glyceraldehyde 3-phosphate and beta-D-fructose 6-phosphate from D-ribose 5-phosphate and D-xylulose 5-phosphate (non-oxidative stage): step 2/3. Its function is as follows. Transaldolase is important for the balance of metabolites in the pentose-phosphate pathway. The sequence is that of Transaldolase from Vibrio vulnificus (strain CMCP6).